A 402-amino-acid chain; its full sequence is Cholinephosphotransferase 1 (402 aa).

Residues 1–62 (MGLAEGLAAR…LVEKVPLWLA (62 aa)) are Cytoplasmic-facing. A helical membrane pass occupies residues 63 to 83 (PNTITMVGLLLNVLSTLILVC). Asn-64 is a binding site for CDP-choline. At 84–93 (YCPTATEGAP) the chain is on the lumenal side. Residues 94 to 118 (FWTYLLCAIGLFVYQSLDAIDGKQA) traverse the membrane as a helical segment. 2 residues coordinate Mg(2+): Asp-111 and Asp-114. Residue Arg-119 participates in CDP-choline binding. Residues 119 to 125 (RRTNSSS) are Cytoplasmic-facing. The helical transmembrane segment at 126–150 (PLGEMFDHGCDSISIVFVNLGTIAA) threads the bilayer. Asp-132 contributes to the Mg(2+) binding site. His-133 functions as the Proton acceptor in the catalytic mechanism. Residue Asp-136 participates in Mg(2+) binding. At 151-160 (VRLGTLPGWM) the chain is on the lumenal side. A helical membrane pass occupies residues 161–179 (FYCCFVGMFMFYCAQWQTY). Topologically, residues 180–190 (VCGTLKFGIID) are cytoplasmic. The helical transmembrane segment at 191–207 (VTELQISVTVMFLMTAV) threads the bilayer. Residues 208 to 222 (CGPELWDYEIPFTGL) lie on the Lumenal side of the membrane. A helical membrane pass occupies residues 223–248 (PMKTIPLLGIIGGTVYSCSNYFRVIL). Topologically, residues 249–265 (SGGVGKNGSTVAGTSVL) are cytoplasmic. Residues 266 to 281 (SPGLHIGLVLLLALMI) form a helical membrane-spanning segment. The Lumenal portion of the chain corresponds to 282 to 293 (YKKSTTNLFLQN). The chain crosses the membrane as a helical span at residues 294–316 (PCLYTLAFGFVSAKITIKLVIAH). Residues 317 to 329 (MTKSEISLQDTAF) are Cytoplasmic-facing. Residues 330-339 (IGPGLLFFNQ) form a helical membrane-spanning segment. Topologically, residues 340–346 (YFNSFID) are lumenal. Residues 347-376 (EYIVLWIAMVISFADLLRYCISVCLQIATH) traverse the membrane as a helical segment. Residues 377 to 402 (LRISVFRISSNQAAEQVQTQKQKLTD) lie on the Cytoplasmic side of the membrane.

The protein belongs to the CDP-alcohol phosphatidyltransferase class-I family. Homodimer. The cofactor is Mg(2+). Mn(2+) is required as a cofactor.

It is found in the golgi apparatus membrane. It carries out the reaction CDP-choline + a 1,2-diacyl-sn-glycerol = a 1,2-diacyl-sn-glycero-3-phosphocholine + CMP + H(+). The catalysed reaction is 1,2-dioctanoyl-sn-glycerol + CDP-choline = 1,2-dioctanoyl-sn-glycero-3-phosphocholine + CMP + H(+). The enzyme catalyses 1-octadecanoyl-2-(5Z,8Z,11Z,14Z-eicosatetraenoyl)-sn-glycerol + CDP-choline = 1-octadecanoyl-2-(5Z,8Z,11Z,14Z-eicosatetraenoyl)-sn-glycero-3-phosphocholine + CMP + H(+). It catalyses the reaction 1-hexadecanoyl-2-(9Z-octadecenoyl)-sn-glycerol + CDP-choline = 1-hexadecanoyl-2-(9Z-octadecenoyl)-sn-glycero-3-phosphocholine + CMP + H(+). It carries out the reaction 1-hexadecanoyl-2-(4Z,7Z,10Z,13Z,16Z,19Z-docosahexaenoyl)-sn-glycerol + CDP-choline = 1-hexadecanoyl-2-(4Z,7Z,10Z,13Z,16Z,19Z-docosahexaenoyl)-sn-glycero-3-phosphocholine + CMP + H(+). It participates in phospholipid metabolism; phosphatidylcholine biosynthesis; phosphatidylcholine from phosphocholine: step 2/2. Its function is as follows. Catalyzes the final step of de novo phosphatidylcholine (PC) synthesis, i.e. the transfer of choline phosphate from CDP-choline to the free hydroxyl of a diacylglycerol (DAG), producing a PC. It thereby plays a central role in the formation and maintenance of vesicular membranes. Shows a high preference for CDP-choline over CDP-ethanolamine as substrate. The sequence is that of Cholinephosphotransferase 1 (chpt1) from Xenopus laevis (African clawed frog).